We begin with the raw amino-acid sequence, 196 residues long: Peptide methionine sulfoxide reductase MsrA 2 (196 aa).

C36 is a catalytic residue.

The protein belongs to the MsrA Met sulfoxide reductase family.

It catalyses the reaction L-methionyl-[protein] + [thioredoxin]-disulfide + H2O = L-methionyl-(S)-S-oxide-[protein] + [thioredoxin]-dithiol. The enzyme catalyses [thioredoxin]-disulfide + L-methionine + H2O = L-methionine (S)-S-oxide + [thioredoxin]-dithiol. Has an important function as a repair enzyme for proteins that have been inactivated by oxidation. Catalyzes the reversible oxidation-reduction of methionine sulfoxide in proteins to methionine. This Caulobacter vibrioides (strain ATCC 19089 / CIP 103742 / CB 15) (Caulobacter crescentus) protein is Peptide methionine sulfoxide reductase MsrA 2 (msrA2).